The primary structure comprises 33 residues: Beta/kappa-theraphotoxin-Hlv1a (33 aa).

Intrachain disulfides connect C2–C17, C9–C22, and C16–C29. The residue at position 33 (I33) is an Isoleucine amide.

It belongs to the neurotoxin 10 (Hwtx-1) family. 11 (haplotoxin-2) subfamily. Expressed by the venom gland.

It is found in the secreted. In terms of biological role, spider venom neurotoxin that blocks voltage-gated sodium channel Nav1.3/SCN3A in human (IC(50)=80 nM) and rat (IC(50)=160 nM). Partially inhibits human Kv11.1/KCNH2/ERG (25% at 175 uM). This Cyriopagopus lividus (Cobalt blue tarantula) protein is Beta/kappa-theraphotoxin-Hlv1a.